Here is a 119-residue protein sequence, read N- to C-terminus: Large ribosomal subunit protein bL20 (119 aa).

The protein belongs to the bacterial ribosomal protein bL20 family.

Binds directly to 23S ribosomal RNA and is necessary for the in vitro assembly process of the 50S ribosomal subunit. It is not involved in the protein synthesizing functions of that subunit. This is Large ribosomal subunit protein bL20 from Thermoanaerobacter sp. (strain X514).